Here is a 170-residue protein sequence, read N- to C-terminus: Phosphopantetheine adenylyltransferase (170 aa).

T10 provides a ligand contact to substrate. ATP-binding positions include 10-11 (TF) and H18. 3 residues coordinate substrate: K42, L75, and R89. ATP-binding positions include 90 to 92 (GVR), E100, and 125 to 131 (YTYVASS).

Belongs to the bacterial CoaD family. Homohexamer. Mg(2+) is required as a cofactor.

The protein resides in the cytoplasm. It catalyses the reaction (R)-4'-phosphopantetheine + ATP + H(+) = 3'-dephospho-CoA + diphosphate. The protein operates within cofactor biosynthesis; coenzyme A biosynthesis; CoA from (R)-pantothenate: step 4/5. Reversibly transfers an adenylyl group from ATP to 4'-phosphopantetheine, yielding dephospho-CoA (dPCoA) and pyrophosphate. The sequence is that of Phosphopantetheine adenylyltransferase from Chlorobium limicola (strain DSM 245 / NBRC 103803 / 6330).